The following is a 705-amino-acid chain: Lethal(3)malignant brain tumor-like protein 2 (705 aa).

Residues 1–84 (MEKPPSIEET…GTPRSLDGSG (84 aa)) form a disordered region. Phosphoserine is present on Ser-13. Over residues 15 to 25 (PMEEEEDDDLE) the composition is skewed to acidic residues. Over residues 38–49 (SSVGSESSSYLE) the composition is skewed to low complexity. Residues 50 to 60 (ESSEAENEDRE) are compositionally biased toward acidic residues. Ser-67 bears the Phosphoserine mark. Thr-76 bears the Phosphothreonine mark. The FCS-type zinc-finger motif lies at 81-116 (DGSGSEPAVCEMCGIVGTREAFFSKTKRFCSVSCSR). Positions 90, 93, 110, and 114 each coordinate Zn(2+). MBT repeat units lie at residues 179–283 (FDWG…LVPP), 291–391 (TDWK…IKMS), 397–500 (MAHH…LTPP), and 508–604 (FNWE…LQPP). Ser-338 bears the Phosphoserine mark. A Glycyl lysine isopeptide (Lys-Gly) (interchain with G-Cter in SUMO2) cross-link involves residue Lys-405. The disordered stretch occupies residues 608–705 (EPATPLKAKE…VENIKQETDD (98 aa)). The segment covering 619–634 (TKKKKKQFGKKRKRIP) has biased composition (basic residues). Glycyl lysine isopeptide (Lys-Gly) (interchain with G-Cter in SUMO2) cross-links involve residues Lys-647, Lys-659, and Lys-675. 3 positions are modified to phosphoserine: Ser-683, Ser-688, and Ser-689. Residue Lys-700 forms a Glycyl lysine isopeptide (Lys-Gly) (interchain with G-Cter in SUMO1); alternate linkage. A Glycyl lysine isopeptide (Lys-Gly) (interchain with G-Cter in SUMO2); alternate cross-link involves residue Lys-700.

Part of the E2F6.com-1 complex in G0 phase composed of E2F6, MGA, MAX, TFDP1, CBX3, BAT8, EUHMTASE1, RING1, RNF2, MBLR, BAT8 and YAF2.

The protein localises to the nucleus. In terms of biological role, putative Polycomb group (PcG) protein. PcG proteins maintain the transcriptionally repressive state of genes, probably via a modification of chromatin, rendering it heritably changed in its expressibility. Its association with a chromatin-remodeling complex suggests that it may contribute to prevent expression of genes that trigger the cell into mitosis. Binds to monomethylated and dimethylated 'Lys-20' on histone H4. Binds histone H3 peptides that are monomethylated or dimethylated on 'Lys-4', 'Lys-9' or 'Lys-27'. This is Lethal(3)malignant brain tumor-like protein 2 (L3MBTL2) from Pongo abelii (Sumatran orangutan).